The chain runs to 496 residues: Aldehyde dehydrogenase 1A1 (496 aa).

2 positions are modified to N6-acetyllysine: Lys86 and Lys123. NAD(+) is bound by residues 162–165 (IPWN), 188–191 (KPAE), 221–222 (GP), and 241–242 (GS). At Lys247 the chain carries N6-acetyllysine. Residue Glu264 is the Proton acceptor of the active site. NAD(+) is bound at residue 264–266 (ELG). Cys298 (nucleophile) is an active-site residue. Positions 331 to 496 (LAPEVNQGPQ…VTVKISQKNS (166 aa)) are mediates interaction with PRMT3. 344-348 (EQYNK) lines the NAD(+) pocket. Lys348 and Lys362 each carry N6-acetyllysine. 395–397 (EIF) is a binding site for NAD(+). Residue Lys405 is modified to N6-acetyllysine. Ser408 carries the phosphoserine modification. 3 positions are modified to N6-acetyllysine: Lys414, Lys430, and Lys490.

This sequence belongs to the aldehyde dehydrogenase family. As to quaternary structure, homotetramer. Interacts with PRMT3; the interaction is direct, inhibits ALDH1A1 aldehyde dehydrogenase activity and is independent of the methyltransferase activity of PRMT3. Post-translationally, the N-terminus is blocked most probably by acetylation.

Its subcellular location is the cytoplasm. It is found in the cytosol. The protein resides in the cell projection. It localises to the axon. The enzyme catalyses an aldehyde + NAD(+) + H2O = a carboxylate + NADH + 2 H(+). The catalysed reaction is all-trans-retinal + NAD(+) + H2O = all-trans-retinoate + NADH + 2 H(+). It carries out the reaction 9-cis-retinal + NAD(+) + H2O = 9-cis-retinoate + NADH + 2 H(+). It catalyses the reaction 11-cis-retinal + NAD(+) + H2O = 11-cis-retinoate + NADH + 2 H(+). The enzyme catalyses 13-cis-retinal + NAD(+) + H2O = 13-cis-retinoate + NADH + 2 H(+). The catalysed reaction is (E)-4-hydroxynon-2-enal + NAD(+) + H2O = (E)-4-hydroxynon-2-enoate + NADH + 2 H(+). It carries out the reaction malonaldehyde + NAD(+) + H2O = 3-oxopropanoate + NADH + 2 H(+). It catalyses the reaction hexanal + NAD(+) + H2O = hexanoate + NADH + 2 H(+). The enzyme catalyses propanal + NAD(+) + H2O = propanoate + NADH + 2 H(+). The catalysed reaction is 3-deoxyglucosone + NAD(+) + H2O = 2-dehydro-3-deoxy-D-gluconate + NADH + 2 H(+). It carries out the reaction acetaldehyde + NAD(+) + H2O = acetate + NADH + 2 H(+). It catalyses the reaction benzaldehyde + NAD(+) + H2O = benzoate + NADH + 2 H(+). The enzyme catalyses 4-aminobutanal + NAD(+) + H2O = 4-aminobutanoate + NADH + 2 H(+). The protein operates within cofactor metabolism; retinol metabolism. In terms of biological role, cytosolic dehydrogenase that catalyzes the irreversible oxidation of a wide range of aldehydes to their corresponding carboxylic acid. Functions downstream of retinol dehydrogenases and catalyzes the oxidation of retinaldehyde into retinoic acid, the second step in the oxidation of retinol/vitamin A into retinoic acid. This pathway is crucial to control the levels of retinol and retinoic acid, two important molecules which excess can be teratogenic and cytotoxic. Also oxidizes aldehydes resulting from lipid peroxidation like (E)-4-hydroxynon-2-enal/HNE, malonaldehyde and hexanal that form protein adducts and are highly cytotoxic. By participating for instance to the clearance of (E)-4-hydroxynon-2-enal/HNE in the lens epithelium prevents the formation of HNE-protein adducts and lens opacification. Functions also downstream of fructosamine-3-kinase in the fructosamine degradation pathway by catalyzing the oxidation of 3-deoxyglucosone, the carbohydrate product of fructosamine 3-phosphate decomposition, which is itself a potent glycating agent that may react with lysine and arginine side-chains of proteins. Also has an aminobutyraldehyde dehydrogenase activity and is probably part of an alternative pathway for the biosynthesis of GABA/4-aminobutanoate in midbrain, thereby playing a role in GABAergic synaptic transmission. This is Aldehyde dehydrogenase 1A1 from Oryctolagus cuniculus (Rabbit).